A 388-amino-acid chain; its full sequence is Diacylglycerol O-acyltransferase 2 (388 aa).

Topologically, residues 1–69 (MKTLIAAYSG…NRSKVEKQLQ (69 aa)) are cytoplasmic. Positions 16-40 (RQAEADRSQRSHGGPALSREGSGRW) are disordered. The helical transmembrane segment at 70-88 (VISVLQWVLSFLVLGVACS) threads the bilayer. Topologically, residues 89 to 92 (AILM) are lumenal. A helical transmembrane segment spans residues 93-112 (YIFCTDCWLIAVLYFTWLVF). Over 113-388 (DWNTPKKGGR…LPETEVLEVN (276 aa)) the chain is Cytoplasmic.

Belongs to the diacylglycerol acyltransferase family. In terms of assembly, forms multimeric complexes consisting of several DGAT2 subunits. Interacts with SLC27A1 and this interaction is enhanced in the presence of ZFYVE1. Predominantly expressed in liver and white adipose tissue. Expressed at lower level in mammary gland, testis and peripheral blood leukocytes. Expressed in sebaceous glands of normal skin but decreased psoriatic skin.

Its subcellular location is the endoplasmic reticulum membrane. The protein localises to the lipid droplet. The protein resides in the cytoplasm. It localises to the perinuclear region. The enzyme catalyses an acyl-CoA + a 1,2-diacyl-sn-glycerol = a triacyl-sn-glycerol + CoA. It catalyses the reaction all-trans-retinol + an acyl-CoA = an all-trans-retinyl ester + CoA. It carries out the reaction 2-(9Z-octadecenoyl)-glycerol + (9Z)-octadecenoyl-CoA = 1,2-di-(9Z-octadecenoyl)-sn-glycerol + CoA. The catalysed reaction is 1,2-di-(9Z-octadecenoyl)-sn-glycerol + (9Z)-octadecenoyl-CoA = 1,2,3-tri-(9Z-octadecenoyl)-glycerol + CoA. The enzyme catalyses all-trans-retinol + hexadecanoyl-CoA = all-trans-retinyl hexadecanoate + CoA. It catalyses the reaction 1-O-(9Z-octadecenyl)-glycerol + (9Z)-octadecenoyl-CoA = 1-O-(9Z-octadecyl)-3-(9Z-octadecenoyl)-glycerol + CoA. It carries out the reaction 1-(9Z-octadecenoyl)-glycerol + (9Z)-octadecenoyl-CoA = 1,2-di-(9Z-octadecenoyl)-glycerol + CoA. The catalysed reaction is 1,2-di-(9Z-octadecenoyl)-sn-glycerol + hexadecanoyl-CoA = 1,2-di-(9Z)-octadecenoyl-3-hexadecanoyl-sn-glycerol + CoA. The enzyme catalyses 1,3-di-(9Z-octadecenoyl)-glycerol + (9Z)-octadecenoyl-CoA = 1,2,3-tri-(9Z-octadecenoyl)-glycerol + CoA. It catalyses the reaction 2,3-di-(9Z)-octadecenoyl-sn-glycerol + (9Z)-octadecenoyl-CoA = 1,2,3-tri-(9Z-octadecenoyl)-glycerol + CoA. It carries out the reaction 2-(9Z-octadecenoyl)-glycerol + hexadecanoyl-CoA = 1-hexadecanoyl-2-(9Z-octadecenoyl)-sn-glycerol + CoA. Its pathway is glycerolipid metabolism; triacylglycerol biosynthesis. Inhibited by niacin. In terms of biological role, essential acyltransferase that catalyzes the terminal and only committed step in triacylglycerol synthesis by using diacylglycerol and fatty acyl CoA as substrates. Required for synthesis and storage of intracellular triglycerides. Probably plays a central role in cytosolic lipid accumulation. In liver, is primarily responsible for incorporating endogenously synthesized fatty acids into triglycerides. Also functions as an acyl-CoA retinol acyltransferase (ARAT). Also able to use 1-monoalkylglycerol (1-MAkG) as an acyl acceptor for the synthesis of monoalkyl-monoacylglycerol (MAMAG). The chain is Diacylglycerol O-acyltransferase 2 from Homo sapiens (Human).